We begin with the raw amino-acid sequence, 709 residues long: Bud site selection protein 14 (709 aa).

Position 2 is an N-acetylserine (Ser2). Residues 61–258 form a disordered region; sequence DIINNRPTSG…DYQPLSPPRE (198 aa). Composition is skewed to polar residues over residues 62–74 and 89–107; these read IINNRPTSGSKLT and VTPTSNKSSPFNSKLNILS. 2 stretches are compositionally biased toward basic and acidic residues: residues 111–123 and 131–150; these read EKGHDVLRNRDDD and VEKHMHSNSKRDQRHYKENS. Tyr159 is subject to Phosphotyrosine. Residues Ser160 and Ser162 each carry the phosphoserine modification. Residue Thr177 is modified to Phosphothreonine. Phosphoserine is present on residues Ser212 and Ser222. Acidic residues predominate over residues 212 to 226; sequence SEDEDEEENYSDDDD. The SH3 domain maps to 259-320; sequence LDPDKLYALY…PAEILETFPE (62 aa). A disordered region spans residues 334–367; it reads SSQSVASSDSKDDSISSGNKNQSDAESIIPTPAL. Residues Ser376, Ser378, and Ser401 each carry the phosphoserine modification. A compositionally biased stretch (acidic residues) spans 396–406; sequence DTSLDSNDDGG. Disordered stretches follow at residues 396–421, 464–510, 525–571, and 600–680; these read DTSLDSNDDGGEGNGQSYDDDVDNDK, NVKK…SDYD, ANGM…SSRA, and ASLG…PASK. Over residues 470-504 the composition is skewed to basic and acidic residues; it reads RQDNKNESEPKTSSSKDREDDYNANRYVGQEKSEP. A Phosphoserine modification is found at Ser507. The segment covering 531 to 552 has biased composition (polar residues); that stretch reads SDSQNSLSTIGEFSPSSSEWTN. Low complexity predominate over residues 553–569; sequence ESPSTPIVEESSSIPSS. Positions 600-614 are enriched in polar residues; that stretch reads ASLGSSGGMANQTDA. Over residues 615–633 the composition is skewed to basic and acidic residues; the sequence is EQPKEELEKHHSTPEEEKQ. Residues Ser655, Ser658, and Ser670 each carry the phosphoserine modification. The segment covering 655–671 has biased composition (low complexity); it reads SSASINSSLSGSRALSN.

In terms of assembly, interacts with GLC7.

Its function is as follows. Important for bud site selection. Seems to be a regulatory subunit of the BUD14-GLC7 type-I phosphatase complex. The BUD14-GLC7 complex is necessary to regulate microtubule dynamics at the cortex and may function as a specific activator of the dynein complex. This is Bud site selection protein 14 (BUD14) from Saccharomyces cerevisiae (strain ATCC 204508 / S288c) (Baker's yeast).